The chain runs to 295 residues: Ribosomal protein L11 methyltransferase (295 aa).

Thr145, Gly166, Asp188, and Asn230 together coordinate S-adenosyl-L-methionine.

Belongs to the methyltransferase superfamily. PrmA family.

Its subcellular location is the cytoplasm. It catalyses the reaction L-lysyl-[protein] + 3 S-adenosyl-L-methionine = N(6),N(6),N(6)-trimethyl-L-lysyl-[protein] + 3 S-adenosyl-L-homocysteine + 3 H(+). Functionally, methylates ribosomal protein L11. In Haemophilus influenzae (strain PittEE), this protein is Ribosomal protein L11 methyltransferase.